The sequence spans 557 residues: TBCC domain-containing protein 1 (557 aa).

The 146-residue stretch at 290–435 folds into the C-CAP/cofactor C-like domain; sequence TTKRAKIACN…LEDHMARTGL (146 aa).

The protein belongs to the TBCC family.

It is found in the cytoplasm. The protein localises to the cytoskeleton. The protein resides in the microtubule organizing center. It localises to the centrosome. Its subcellular location is the spindle pole. Functionally, plays a role in the regulation of centrosome and Golgi apparatus positioning, with consequences on cell shape and cell migration. This Bos taurus (Bovine) protein is TBCC domain-containing protein 1 (TBCCD1).